The sequence spans 352 residues: Glycogen synthase kinase 3 (352 aa).

The Protein kinase domain occupies 20-310 (YTVERVAGQG…PLDALCHPFF (291 aa)). ATP contacts are provided by residues 26–34 (AGQGTFGTV) and Lys-49. Asp-152 (proton acceptor) is an active-site residue.

It belongs to the protein kinase superfamily. CMGC Ser/Thr protein kinase family. GSK-3 subfamily. Inhibited by cyclin kinase 2 (CDK2) inhibitors, including GW8510.

It carries out the reaction L-seryl-[tau protein] + ATP = O-phospho-L-seryl-[tau protein] + ADP + H(+). It catalyses the reaction L-threonyl-[tau protein] + ATP = O-phospho-L-threonyl-[tau protein] + ADP + H(+). The sequence is that of Glycogen synthase kinase 3 from Trypanosoma brucei brucei (strain 927/4 GUTat10.1).